Reading from the N-terminus, the 274-residue chain is Pyrroline-5-carboxylate reductase 3 (274 aa).

Position 2 is an N-acetylalanine (Ala-2).

Belongs to the pyrroline-5-carboxylate reductase family. As to quaternary structure, homodecamer; composed of 5 homodimers.

The protein resides in the cytoplasm. The enzyme catalyses L-proline + NADP(+) = (S)-1-pyrroline-5-carboxylate + NADPH + 2 H(+). It catalyses the reaction L-proline + NAD(+) = (S)-1-pyrroline-5-carboxylate + NADH + 2 H(+). It participates in amino-acid biosynthesis; L-proline biosynthesis; L-proline from L-glutamate 5-semialdehyde: step 1/1. Functionally, oxidoreductase that catalyzes the last step in proline biosynthesis, which corresponds to the reduction of pyrroline-5-carboxylate (P5C) to L-proline using NAD(P)H. Proline is synthesized from either glutamate or ornithine; both are converted to P5C, and then to proline via pyrroline-5-carboxylate reductases (PYCRs). PYCR3 is exclusively linked to the biosynthesis of proline from ornithine. The sequence is that of Pyrroline-5-carboxylate reductase 3 from Rattus norvegicus (Rat).